A 151-amino-acid chain; its full sequence is UPF0208 membrane protein Spro_3315 (151 aa).

The next 2 helical transmembrane spans lie at 46–64 and 70–90; these read FAVR…WQIA and GPAI…LWWL.

This sequence belongs to the UPF0208 family.

Its subcellular location is the cell inner membrane. In Serratia proteamaculans (strain 568), this protein is UPF0208 membrane protein Spro_3315.